The primary structure comprises 384 residues: Cell adhesion molecule CEACAM18 (384 aa).

The N-terminal stretch at 1–30 (MDLSRPRWSLWRRVFLMASLLACGICQASG) is a signal peptide. Asn108, Asn112, Asn121, Asn162, and Asn270 each carry an N-linked (GlcNAc...) asparagine glycan. The 88-residue stretch at 227–314 (PDYVLLRSNP…LIMYMDVRIQ (88 aa)) folds into the Ig-like C2-type domain. Cys255 and Cys296 are oxidised to a cystine. Residues 358–384 (QPLLNQDKSGSMSVHPRPEDKTRRASR) form a disordered region. Residues 359–369 (PLLNQDKSGSM) show a composition bias toward polar residues. Residues 373–384 (PRPEDKTRRASR) show a composition bias toward basic and acidic residues.

It belongs to the immunoglobulin superfamily. CEA family.

This is Cell adhesion molecule CEACAM18 from Homo sapiens (Human).